Here is a 443-residue protein sequence, read N- to C-terminus: MQPSEMVMNPKQVFLSVLIFGVAGLLLFMYLQVWIEEQHTGRVEKRREQKVTSGWGPVKYLRPVPRIMSTEKIQEHITNQNPKFHMPEDVREKKENLLLNSERSTRLLTKTSHSQGGDQALSKSTGSPTEKLIEKRQGAKTVFNKFSNMNWPVDIHPLNKSLVKDNKWKKTEETQEKRRSFLQEFCKKYGGVSHHQSHLFHTVSRIYVEDKHKILYCEVPKAGCSNWKRILMVLNGLASSAYNISHNAVHYGKHLKKLDSFDLKGIYTRLNTYTKAVFVRDPMERLVSAFRDKFEHPNSYYHPVFGKAIIKKYRPNACEEALINGSGVKFKEFIHYLLDSHRPVGMDIHWEKVSKLCYPCLINYDFVGKFETLEEDANYFLQMIGAPKELKFPNFKDRHSSDERTNAQVVRQYLKDLTRTERQLIYDFYYLDYLMFNYTTPFL.

The Cytoplasmic segment spans residues 1 to 12; it reads MQPSEMVMNPKQ. A helical; Signal-anchor for type II membrane protein transmembrane segment spans residues 13 to 33; that stretch reads VFLSVLIFGVAGLLLFMYLQV. The Lumenal portion of the chain corresponds to 34-443; that stretch reads WIEEQHTGRV…LMFNYTTPFL (410 aa). Residues 108–128 show a composition bias toward polar residues; sequence LTKTSHSQGGDQALSKSTGSP. The segment at 108–132 is disordered; it reads LTKTSHSQGGDQALSKSTGSPTEKL. N-linked (GlcNAc...) asparagine glycosylation is present at Asn-159. Residue 220 to 226 participates in 3'-phosphoadenylyl sulfate binding; the sequence is PKAGCSN. Asn-243 carries N-linked (GlcNAc...) asparagine glycosylation. 280-288 is a 3'-phosphoadenylyl sulfate binding site; it reads RDPMERLVS. 2 N-linked (GlcNAc...) asparagine glycosylation sites follow: Asn-324 and Asn-437.

This sequence belongs to the sulfotransferase 2 family. As to expression, highly expressed in trachea. Also expressed in fetal lung, adult pancreas, testis and salivary gland. Expressed at low level in pituitary gland, apex of the heart, adult lung, prostate and mammary gland. Weakly or not expressed in heart, liver and spinal cord.

It localises to the golgi apparatus membrane. It is found in the secreted. Its function is as follows. Catalyzes the transfer of sulfate to position 4 of non-reducing N-acetylgalactosamine (GalNAc) residues in both N-glycans and O-glycans. Participates in biosynthesis of glycoprotein hormones lutropin and thyrotropin, by mediating sulfation of their carbohydrate structures. Has a higher activity toward carbonic anhydrase VI than toward lutropin. Only active against terminal GalNAcbeta1,GalNAcbeta. Isoform 2, but not isoform 1, is active toward chondroitin. This is Carbohydrate sulfotransferase 9 (CHST9) from Homo sapiens (Human).